Reading from the N-terminus, the 341-residue chain is MWLNSTSLGACFRPVNITLQERRAIASPWFAASFCALGLGSNLLALSVLAGARPGAGPRSSFLALLCGLVLTDFLGLLVTGAVVASQHAALLDWRATDPGCRLCHFMGAAMVFFGLCPLLLGAAMAAERFVGITRPFSRPAATSRRAWATVGLVWVGAGTLGLLPLLGLGRYSVQYPGSWCFLTLGAERGDVAFGLMFALLGSVSVGLSLLLNTVSVATLCRVYHAREATQRPRDCEVEMMVQLVGIMVVATVCWMPLLVFILQTLLQTLPVMSPSGQLLRTTERQLLIYLRVATWNQILDPWVYILFRRSVLRRLHPRFTSQLQAVSLHSPPTQAMLSGP.

Topologically, residues 1–29 (MWLNSTSLGACFRPVNITLQERRAIASPW) are extracellular. Asparagine 4 and asparagine 16 each carry an N-linked (GlcNAc...) asparagine glycan. The helical transmembrane segment at 30–52 (FAASFCALGLGSNLLALSVLAGA) threads the bilayer. The Cytoplasmic portion of the chain corresponds to 53–65 (RPGAGPRSSFLAL). A helical transmembrane segment spans residues 66 to 86 (LCGLVLTDFLGLLVTGAVVAS). Over 87–105 (QHAALLDWRATDPGCRLCH) the chain is Extracellular. The cysteines at positions 104 and 181 are disulfide-linked. Residues 106–127 (FMGAAMVFFGLCPLLLGAAMAA) form a helical membrane-spanning segment. Topologically, residues 128 to 147 (ERFVGITRPFSRPAATSRRA) are cytoplasmic. Residues 148–170 (WATVGLVWVGAGTLGLLPLLGLG) traverse the membrane as a helical segment. Over 171-191 (RYSVQYPGSWCFLTLGAERGD) the chain is Extracellular. The helical transmembrane segment at 192–217 (VAFGLMFALLGSVSVGLSLLLNTVSV) threads the bilayer. Residues 218–244 (ATLCRVYHAREATQRPRDCEVEMMVQL) are Cytoplasmic-facing. The chain crosses the membrane as a helical span at residues 245-268 (VGIMVVATVCWMPLLVFILQTLLQ). Residues 269–287 (TLPVMSPSGQLLRTTERQL) are Extracellular-facing. The chain crosses the membrane as a helical span at residues 288–309 (LIYLRVATWNQILDPWVYILFR). The Cytoplasmic portion of the chain corresponds to 310 to 341 (RSVLRRLHPRFTSQLQAVSLHSPPTQAMLSGP). At serine 328 the chain carries Phosphoserine.

The protein belongs to the G-protein coupled receptor 1 family. As to quaternary structure, interacts with RPGRIP1L. Interacts with RACK1; the interaction regulates TBXA2R cell surface expression. As to expression, in the brain, expressed in all types of glial cells. In the kidney, expressed in the mesangial cells of the glomerulus, smooth muscle cells of the renal arterioles, and in transitional cell epithelium of renal pelvis.

The protein localises to the cell membrane. In terms of biological role, receptor for thromboxane A2 (TXA2), a potent stimulator of platelet aggregation. The activity of this receptor is mediated by a G-protein that activates a phosphatidylinositol-calcium second messenger system. In the kidney, the binding of TXA2 to glomerular TP receptors causes intense vasoconstriction. Activates phospholipase C and adenylyl cyclase. The chain is Thromboxane A2 receptor (Tbxa2r) from Rattus norvegicus (Rat).